Here is a 79-residue protein sequence, read N- to C-terminus: Tau-theraphotoxin-Hs1a (79 aa).

6 cysteine pairs are disulfide-bonded: Cys2-Cys16, Cys9-Cys23, Cys15-Cys31, Cys44-Cys58, Cys51-Cys63, and Cys57-Cys71. Domain repeat units lie at residues 2 to 31 and 42 to 71; these read CAKE…IPHC and TNCA…IPYC. Positions 2–71 are 2 X approximate repeats with cysteine pattern C-C-CC-C-C; the sequence is CAKEGEVCSW…DCPLAFIPYC (70 aa).

The protein belongs to the neurotoxin 23 family. Double-knot toxin subfamily. As to quaternary structure, interacts with TRPV1 (2 toxins (4 moieties) bind 1 channel (homotetramer)). Expressed by the venom gland.

The protein resides in the secreted. Selectively activates the heat-activated TRPV1 channel. It binds to TRPV1 in an open state-dependent manner, trapping it there to produce irreversible currents. It binds to the outer edge of the external pore of TRPV1 in a counterclockwise configuration, using a limited protein-protein interface and inserting hydrophobic residues into the bilayer. It also partitions naturally into membranes, with the two lobes exhibiting opposing energetics for membrane partitioning (K1) and channel activation (K2). In addition, the toxin disrupts a cluster of hydrophobic residues behind the selectivity filter that are critical for channel activation. The chain is Tau-theraphotoxin-Hs1a from Cyriopagopus schmidti (Chinese bird spider).